Reading from the N-terminus, the 294-residue chain is 33 kDa chaperonin (294 aa).

Cystine bridges form between cysteine 239/cysteine 241 and cysteine 272/cysteine 275.

Belongs to the HSP33 family. In terms of processing, under oxidizing conditions two disulfide bonds are formed involving the reactive cysteines. Under reducing conditions zinc is bound to the reactive cysteines and the protein is inactive.

It localises to the cytoplasm. In terms of biological role, redox regulated molecular chaperone. Protects both thermally unfolding and oxidatively damaged proteins from irreversible aggregation. Plays an important role in the bacterial defense system toward oxidative stress. The polypeptide is 33 kDa chaperonin (Listeria monocytogenes serotype 4a (strain HCC23)).